We begin with the raw amino-acid sequence, 303 residues long: HTH-type transcriptional regulator YjiE (303 aa).

Residues I11–S68 enclose the HTH lysR-type domain. A DNA-binding region (H-T-H motif) is located at residues F28–R47.

Belongs to the LysR transcriptional regulatory family. In terms of assembly, forms dimers, tetramers and possibly dodecameric complexes; oligomerization may be governed by cellular concentrations. DNA-binding seems to decrease oligomerization.

In terms of biological role, protects cells from HOCl (hypochlorite) stress but not peroxide or diamide stress. Decreases the intracellular load of reactive oxygen species by up-regulating genes involved in methionine and cysteine biosynthesis and down-regulating Fur-regulated genes involved in iron acquisition. Has also been suggested to down-regulate expression of the flagellar regulon, decreasing motility, but this activity was not confirmed in a second study. The polypeptide is HTH-type transcriptional regulator YjiE (yjiE) (Escherichia coli (strain K12)).